A 309-amino-acid polypeptide reads, in one-letter code: Histone-lysine N-methyltransferase SETMAR (309 aa).

The region spanning 74-137 is the Pre-SET domain; sequence PGCACIETPC…RCRNRVVQNG (64 aa). 9 residues coordinate Zn(2+): cysteine 76, cysteine 78, cysteine 83, cysteine 88, cysteine 90, cysteine 119, cysteine 123, cysteine 125, and cysteine 129. One can recognise an SET domain in the interval 140–264; that stretch reads FLLQVFQTEK…PGEELSYDYS (125 aa). S-adenosyl-L-methionine contacts are provided by residues 150-152, tyrosine 193, arginine 221, and 224-225; these read KGW and NH. The Zn(2+) site is built by cysteine 227, cysteine 288, cysteine 290, and cysteine 295. The 17-residue stretch at 284 to 300 folds into the Post-SET domain; that stretch reads PRKPCYCGAQSCTTFLP.

The protein belongs to the class V-like SAM-binding methyltransferase superfamily.

It localises to the nucleus. It is found in the chromosome. It carries out the reaction L-lysyl(36)-[histone H3] + 2 S-adenosyl-L-methionine = N(6),N(6)-dimethyl-L-lysyl(36)-[histone H3] + 2 S-adenosyl-L-homocysteine + 2 H(+). In terms of biological role, histone methyltransferase that methylates 'Lys-4' and 'Lys-36' of histone H3, 2 specific tags for epigenetic transcriptional activation. Specifically mediates dimethylation of H3 'Lys-36'. The chain is Histone-lysine N-methyltransferase SETMAR from Mus musculus (Mouse).